The following is a 576-amino-acid chain: Rho GTPase-activating protein gacP (576 aa).

Residues 123–189 (LKSIIKTELK…RTNFERVGID (67 aa)) adopt a coiled-coil conformation. The Rho-GAP domain occupies 277-462 (EDLSVLLNRE…TIIQNFDRIF (186 aa)). The tract at residues 472 to 576 (VPDTYVPPPN…DEGDAVELSD (105 aa)) is disordered. Residues 482-500 (NTRNNSVNNFNNVQPSSFS) are compositionally biased toward low complexity. A compositionally biased stretch (polar residues) spans 501–513 (ASTSRSINLNKST). Residues 514-530 (NNPNINDDNNNNNNINN) show a composition bias toward low complexity. Acidic residues predominate over residues 565–576 (SFDEGDAVELSD).

It localises to the cytoplasm. Its function is as follows. Rho GTPase-activating protein involved in the signal transduction pathway. The protein is Rho GTPase-activating protein gacP (gacP) of Dictyostelium discoideum (Social amoeba).